We begin with the raw amino-acid sequence, 74 residues long: Putative Fe(2+) transport protein A (74 aa).

Belongs to the FeoA family.

Its function is as follows. Might be involved in Fe(2+) ion uptake. In Campylobacter jejuni subsp. jejuni serotype O:2 (strain ATCC 700819 / NCTC 11168), this protein is Putative Fe(2+) transport protein A.